The sequence spans 422 residues: Zinc finger protein zfp-2 (422 aa).

The disordered stretch occupies residues Ala-95–Val-119. The segment covering Thr-99–Ser-113 has biased composition (low complexity). 7 C2H2-type zinc fingers span residues Tyr-171–His-194, Phe-200–His-222, Phe-229–His-251, Ser-255–His-278, Tyr-300–His-322, Tyr-328–His-350, and Tyr-356–His-379.

As to expression, expressed in vulval cells and all somatic gonad structures such as spermatheca, sheath cells, uterine cells and distal tip cells.

The protein resides in the nucleus. In terms of biological role, probable zinc finger transcription factor that acts as a transcriptional repressor. Acts redundantly with the transcriptional repressor lin-35 to control the development of somatic gonad lineages. May, in addition, suppress sensitivity to RNAi. The chain is Zinc finger protein zfp-2 from Caenorhabditis elegans.